Here is a 197-residue protein sequence, read N- to C-terminus: Protein TIFY 9 (197 aa).

A compositionally biased stretch (polar residues) spans 57–73 (STGNNSDSSAKSRSVPS). A disordered region spans residues 57-84 (STGNNSDSSAKSRSVPSTPREDQPQIPI). The 35-residue stretch at 98–132 (LVSGTVPMTIFYNGSVSVFQVSRNKAGEIMKVANE) folds into the Tify domain. A Jas motif is present at residues 168-193 (PIARRKSLQRFLEKRKERLVSTSPYY). The Nuclear localization signal signature appears at 170-177 (ARRKSLQR).

The protein belongs to the TIFY/JAZ family. In terms of assembly, homo- and heterodimer. Interacts with MYC2, MYC3, MYC4, AFPH2/NINJA, TIFY10A/JAZ1, TIFY10B/JAZ2, TIFY6B/JAZ3, TIFY6A/JAZ4, TIFY11B/JAZ6, TIFY5A/JAZ8, TIFY7/JAZ9, TIFY3A/JAZ11 and TIFY3B/JAZ12. Isoform 1 and isoform 2 interact with COI1. Isoform 3 does not interact with COI1. Interacts with RHD6 and RSL1. Post-translationally, ubiquitinated. Targeted for degradation by the SCF(COI1) E3 ubiquitin ligase-proteasome pathway during jasmonate signaling.

Its subcellular location is the nucleus. Functionally, repressor of jasmonate (JA) responses that lacks the entire Jas domain and possesses severe JA insensitivity and resistance to JA-induced degradation. Acts as an endogenous repressor of JA signal output in JA-stimulated cells. Modulator of JA-controlled growth inhibition in response to wounding. Repressor of jasmonate (JA) responses that lacks part of the Jas domain and possesses JA insensitivity and partial resistance to JA-induced degradation. In terms of biological role, repressor of jasmonate (JA) responses. Interacts with and suppresses RHD6 and RSL1 transcription factor activities to negatively regulate jasmonate-stimulated root hair development. This is Protein TIFY 9 (TIFY9) from Arabidopsis thaliana (Mouse-ear cress).